The primary structure comprises 365 residues: Undecaprenyl-phosphate alpha-N-acetylglucosaminyl 1-phosphate transferase (365 aa).

10 helical membrane passes run L3 to V23, G45 to I65, I99 to L119, V132 to F152, G157 to L177, L187 to L207, V213 to Q233, I242 to M262, Q293 to E313, and L315 to G335.

This sequence belongs to the glycosyltransferase 4 family. WecA subfamily. Mg(2+) is required as a cofactor. Requires Mn(2+) as cofactor.

The protein localises to the cell inner membrane. It carries out the reaction di-trans,octa-cis-undecaprenyl phosphate + UDP-N-acetyl-alpha-D-glucosamine = N-acetyl-alpha-D-glucosaminyl-di-trans,octa-cis-undecaprenyl diphosphate + UMP. Its pathway is bacterial outer membrane biogenesis; LPS O-antigen biosynthesis. The protein operates within bacterial outer membrane biogenesis; enterobacterial common antigen biosynthesis. Functionally, catalyzes the transfer of the GlcNAc-1-phosphate moiety from UDP-GlcNAc onto the carrier lipid undecaprenyl phosphate (C55-P), yielding GlcNAc-pyrophosphoryl-undecaprenyl (GlcNAc-PP-C55). In Yersinia pestis, this protein is Undecaprenyl-phosphate alpha-N-acetylglucosaminyl 1-phosphate transferase.